Reading from the N-terminus, the 885-residue chain is DNA replication licensing factor REC (885 aa).

Residues 36–76 (RVIPAGGNRQPNQGEPGAPDAPSVPPATRQPRGWSRTAGKR) form a disordered region. The C4-type zinc-finger motif lies at 281–308 (CSRCQMEIAMRQRGTFQPRPYQCKRSEC). The MCM domain occupies 430–627 (SFKLLVQSIA…ERDMSLTAHV (198 aa)). 473-480 (GDPGIGKT) serves as a coordination point for ATP. Positions 796 to 805 (SLKEGSSRQG) are enriched in polar residues. Residues 796-818 (SLKEGSSRQGTRGGGGAGGGAGK) are disordered. Positions 806-817 (TRGGGGAGGGAG) are enriched in gly residues.

This sequence belongs to the MCM family.

The protein localises to the nucleus. Required for meiotic DNA recombination in females. Probably not involved in DNA repair and recombination in somatic cells. This chain is DNA replication licensing factor REC (rec), found in Drosophila melanogaster (Fruit fly).